Reading from the N-terminus, the 455-residue chain is MKESDSVEKRKVSMISLGCAKNLVDAEVMLGYLPQDRFEITTDEAQADIIIVNTCGFISDAKEESVETLLEAIEYKKSGNCTLLVVTGCLSQRYAEDMAKELPEVDILLGTGDVPRILELIEAHDRGEDVRQSVGLPQYLYDHTTPRVASSPFYSTYVKIAEGCNNLCSYCIIPQLRGPLRSRSIASVVAEVERLVAAGAQEVNLIAQDITAFGADRHDGASLEGLLRELVKISELRWLRLLYAYPDGISDELIELVATEEKICSYFDVPLQHIDDRVLARMNRRVGEDTIRDLIHRMRQRIPDLTLRTSFIVGFPGETDAEFAKLLAFVEEGHFDRVGVFRYSREEDTPAASLPDQVPEGVKKSRYNKLMKAQQRVSFRRNRALIGRVEPVLVEGYSEETELLLSGRSIRQAPDVDGQVYITAGQADVGQIVPLRITDSSEYDLIGEIVDESDE.

Positions 10 to 126 constitute an MTTase N-terminal domain; sequence RKVSMISLGC…ILELIEAHDR (117 aa). [4Fe-4S] cluster-binding residues include Cys-19, Cys-55, Cys-89, Cys-164, Cys-168, and Cys-171. The 231-residue stretch at 150–380 folds into the Radical SAM core domain; it reads SSPFYSTYVK…MKAQQRVSFR (231 aa). The region spanning 383-451 is the TRAM domain; the sequence is RALIGRVEPV…EYDLIGEIVD (69 aa).

The protein belongs to the methylthiotransferase family. RimO subfamily. [4Fe-4S] cluster serves as cofactor.

It is found in the cytoplasm. It catalyses the reaction L-aspartate(89)-[ribosomal protein uS12]-hydrogen + (sulfur carrier)-SH + AH2 + 2 S-adenosyl-L-methionine = 3-methylsulfanyl-L-aspartate(89)-[ribosomal protein uS12]-hydrogen + (sulfur carrier)-H + 5'-deoxyadenosine + L-methionine + A + S-adenosyl-L-homocysteine + 2 H(+). Its function is as follows. Catalyzes the methylthiolation of an aspartic acid residue of ribosomal protein uS12. In Syntrophotalea carbinolica (strain DSM 2380 / NBRC 103641 / GraBd1) (Pelobacter carbinolicus), this protein is Ribosomal protein uS12 methylthiotransferase RimO.